The following is a 299-amino-acid chain: Probable lipid kinase YegS-like (299 aa).

The DAGKc domain occupies 2-133 (SRSAGSFLIL…IDIAHVNDKT (132 aa)). Residues Thr40, 66–72 (GDGTINE), and Thr95 each bind ATP. Residues Leu215, Asp218, and Leu220 each coordinate Mg(2+). Glu271 acts as the Proton acceptor in catalysis.

It belongs to the diacylglycerol/lipid kinase family. YegS lipid kinase subfamily. Requires Mg(2+) as cofactor. It depends on Ca(2+) as a cofactor.

The protein localises to the cytoplasm. Probably phosphorylates lipids; the in vivo substrate is unknown. The sequence is that of Probable lipid kinase YegS-like from Cronobacter sakazakii (strain ATCC BAA-894) (Enterobacter sakazakii).